The following is a 338-amino-acid chain: Phosphatidate cytidylyltransferase, mitochondrial (338 aa).

This sequence belongs to the TAM41 family. Mg(2+) serves as cofactor.

It is found in the mitochondrion inner membrane. The enzyme catalyses a 1,2-diacyl-sn-glycero-3-phosphate + CTP + H(+) = a CDP-1,2-diacyl-sn-glycerol + diphosphate. It functions in the pathway phospholipid metabolism; CDP-diacylglycerol biosynthesis; CDP-diacylglycerol from sn-glycerol 3-phosphate: step 3/3. Functionally, catalyzes the conversion of phosphatidic acid (PA) to CDP-diacylglycerol (CDP-DAG), an essential intermediate in the synthesis of phosphatidylglycerol, cardiolipin and phosphatidylinositol. This chain is Phosphatidate cytidylyltransferase, mitochondrial (tamm41), found in Xenopus laevis (African clawed frog).